The chain runs to 297 residues: Putative S-adenosyl-L-methionine-dependent methyltransferase MSMEG_0614/MSMEI_0598 (297 aa).

S-adenosyl-L-methionine is bound by residues D125 and 154–155 (DL).

This sequence belongs to the UPF0677 family.

In terms of biological role, exhibits S-adenosyl-L-methionine-dependent methyltransferase activity. The polypeptide is Putative S-adenosyl-L-methionine-dependent methyltransferase MSMEG_0614/MSMEI_0598 (Mycolicibacterium smegmatis (strain ATCC 700084 / mc(2)155) (Mycobacterium smegmatis)).